A 239-amino-acid chain; its full sequence is Tumor necrosis factor ligand superfamily member 8 (239 aa).

Positions 1–36 are disordered; it reads MEPGLQQAGSCGAPSPDPAMQVQPGSVASPWRSTRP. Over 1-43 the chain is Cytoplasmic; the sequence is MEPGLQQAGSCGAPSPDPAMQVQPGSVASPWRSTRPWRSTSRS. The chain crosses the membrane as a helical; Signal-anchor for type II membrane protein span at residues 44–67; the sequence is YFYLSTTALVCLVVAVAIILVLVV. Topologically, residues 68 to 239 are extracellular; that stretch reads QKKDSTPNTT…LSVFLYSSSD (172 aa). Asn-75, Asn-86, Asn-114, Asn-158, Asn-194, and Asn-206 each carry an N-linked (GlcNAc...) asparagine glycan. The 128-residue stretch at 103–230 folds into the THD domain; sequence SWAYLQVSKH…TNTFPLDNVL (128 aa). An intrachain disulfide couples Cys-156 to Cys-182.

Belongs to the tumor necrosis factor family. As to quaternary structure, homotrimer.

Its subcellular location is the membrane. In terms of biological role, cytokine that binds to TNFRSF8/CD30. Induces proliferation of T-cells. The polypeptide is Tumor necrosis factor ligand superfamily member 8 (Tnfsf8) (Mus musculus (Mouse)).